A 617-amino-acid chain; its full sequence is Phosphomethylpyrimidine synthase (617 aa).

Substrate is bound by residues asparagine 230, methionine 259, tyrosine 288, histidine 324, 344-346 (SRG), 385-388 (DGLR), and glutamate 424. Histidine 428 lines the Zn(2+) pocket. A substrate-binding site is contributed by tyrosine 451. Histidine 492 lines the Zn(2+) pocket. Positions 572, 575, and 580 each coordinate [4Fe-4S] cluster.

The protein belongs to the ThiC family. As to quaternary structure, homodimer. [4Fe-4S] cluster serves as cofactor.

It catalyses the reaction 5-amino-1-(5-phospho-beta-D-ribosyl)imidazole + S-adenosyl-L-methionine = 4-amino-2-methyl-5-(phosphooxymethyl)pyrimidine + CO + 5'-deoxyadenosine + formate + L-methionine + 3 H(+). It functions in the pathway cofactor biosynthesis; thiamine diphosphate biosynthesis. Catalyzes the synthesis of the hydroxymethylpyrimidine phosphate (HMP-P) moiety of thiamine from aminoimidazole ribotide (AIR) in a radical S-adenosyl-L-methionine (SAM)-dependent reaction. The protein is Phosphomethylpyrimidine synthase of Paracidovorax citrulli (strain AAC00-1) (Acidovorax citrulli).